The sequence spans 42 residues: uncharacterized protein (42 aa).

Residues 15 to 35 (INVCLSFFFLFYFIFVLFFAA) form a helical membrane-spanning segment.

The protein resides in the membrane. This is an uncharacterized protein from Dictyostelium discoideum (Social amoeba).